The sequence spans 304 residues: Deoxyribonuclease-1-like 1 (304 aa).

The N-terminal stretch at 1-24 is a signal peptide; sequence MPYMAMHGLTVALLLIFLAGGTEA. N-linked (GlcNAc...) asparagine glycosylation occurs at N92. Residue E103 is part of the active site. N-linked (GlcNAc...) asparagine glycosylation is present at N123. H154 is a catalytic residue. A disulfide bond links C193 and C230. A glycan (N-linked (GlcNAc...) asparagine) is linked at N229.

Belongs to the DNase I family.

The protein localises to the endoplasmic reticulum. In Cricetulus griseus (Chinese hamster), this protein is Deoxyribonuclease-1-like 1 (DNASE1L1).